A 313-amino-acid chain; its full sequence is D-apiose import binding protein (313 aa).

A signal peptide spans 1-26 (MKLTRRLTLAAFASALALGTAMPAFA). Residues asparagine 39, 115-116 (DR), 162-164 (DTN), arginine 168, asparagine 218, aspartate 243, and glutamine 263 each bind D-apiofuranose.

Belongs to the bacterial solute-binding protein 2 family.

The protein resides in the periplasm. Functionally, part of an ABC transporter complex involved in D-apiose import. Binds D-apiose, D-ribose and D-ribulose. The chain is D-apiose import binding protein from Rhizobium etli (strain ATCC 51251 / DSM 11541 / JCM 21823 / NBRC 15573 / CFN 42).